The chain runs to 686 residues: LEAF RUST 10 DISEASE-RESISTANCE LOCUS RECEPTOR-LIKE PROTEIN KINASE-like 1.3 (686 aa).

An N-terminal signal peptide occupies residues 1-33 (MFSPVLFRFSKPNSFLVLLFFLSYIHFLPCAQS). The Extracellular portion of the chain corresponds to 34-264 (QREPCDTLFR…AGLSKKGKIG (231 aa)). N-linked (GlcNAc...) asparagine glycosylation is found at Asn-76, Asn-93, Asn-175, Asn-190, and Asn-236. Residues 265–285 (IGFASGFLGATLIGGCLLCIF) form a helical membrane-spanning segment. Over 286–686 (IRRRKKLATQ…SSSNTTASSF (401 aa)) the chain is Cytoplasmic. The Protein kinase domain occupies 358–633 (ENFSKELGDG…DEIVEVLRVI (276 aa)). ATP contacts are provided by residues 364–372 (LGDGGFGTV) and Lys-386. Residue Tyr-432 is modified to Phosphotyrosine. Asp-482 acts as the Proton acceptor in catalysis. At Ser-515 the chain carries Phosphoserine. Phosphothreonine is present on residues Thr-516 and Thr-521. The residue at position 529 (Tyr-529) is a Phosphotyrosine. Residues 657-686 (GLLKHGVPPPLSPETDKTTASSSNTTASSF) form a disordered region. Residues 674-686 (TTASSSNTTASSF) show a composition bias toward low complexity.

This sequence belongs to the protein kinase superfamily. Ser/Thr protein kinase family.

It localises to the cell membrane. The catalysed reaction is L-seryl-[protein] + ATP = O-phospho-L-seryl-[protein] + ADP + H(+). It carries out the reaction L-threonyl-[protein] + ATP = O-phospho-L-threonyl-[protein] + ADP + H(+). The polypeptide is LEAF RUST 10 DISEASE-RESISTANCE LOCUS RECEPTOR-LIKE PROTEIN KINASE-like 1.3 (Arabidopsis thaliana (Mouse-ear cress)).